Reading from the N-terminus, the 185-residue chain is Elongation factor P (185 aa).

It belongs to the elongation factor P family.

It is found in the cytoplasm. It functions in the pathway protein biosynthesis; polypeptide chain elongation. Its function is as follows. Involved in peptide bond synthesis. Stimulates efficient translation and peptide-bond synthesis on native or reconstituted 70S ribosomes in vitro. Probably functions indirectly by altering the affinity of the ribosome for aminoacyl-tRNA, thus increasing their reactivity as acceptors for peptidyl transferase. The polypeptide is Elongation factor P (Lysinibacillus sphaericus (strain C3-41)).